A 339-amino-acid polypeptide reads, in one-letter code: MAILVTGGAGYIGSHTCVELLNSGYEIVVLDNLSNSSAEALNRVKEITGKDLTFYEADLLDREAVDSVFAENEIEAVIHFAGLKAVGESVAIPLKYYHNNLTGTFILCEAMEKYGVKKIVFSSSATVYGVPETSPITEDFPLGATNPYGQTKLMLEQILRDLHTADNEWSVALLRYFNPFGAHPSGRIGEDPNGIPNNLMPYVAQVAVGKLEQLSVFGNDYPTKDGTGVRDYIHVVDLAEGHVKALEKVLNSTGADAYNLGTGTGYSVLEMVKAFEKVSGKEVPYRFADRRPGDIATCFADPAKAKRELGWEAKRGLEEMCADSWRWQSSNVNGYKSAE.

Residues 10 to 12 (GYI), 31 to 35 (DNLSN), 58 to 59 (DL), Phe-80, and Lys-84 each bind NAD(+). 124–126 (SAT) is a binding site for substrate. Tyr-148 (proton acceptor) is an active-site residue. NAD(+) contacts are provided by Lys-152 and Tyr-176. Substrate-binding positions include 176-178 (YFN), 197-199 (NNL), Arg-230, and 291-294 (RPGD).

It belongs to the NAD(P)-dependent epimerase/dehydratase family. NAD(+) is required as a cofactor.

The enzyme catalyses UDP-alpha-D-glucose = UDP-alpha-D-galactose. It carries out the reaction UDP-N-acetyl-alpha-D-glucosamine = UDP-N-acetyl-alpha-D-galactosamine. It participates in cell wall biogenesis; teichoic acid biosynthesis. Functionally, catalyzes two distinct but analogous reactions: the reversible epimerization of UDP-glucose to UDP-galactose and the reversible epimerization of UDP-N-acetylglucosamine to UDP-N-acetylgalactosamine. The enzyme is more efficient in catalyzing the interconversion between unacetylated than between corresponding N-acetylated substrates. Essential for growth in media containing either glucose or galactose. May protect the cell from the toxic effects of galactose and glucose or derivatives of both sugars. Involved in the biosynthesis of teichoic acids via the formation of UDP-N-acetylgalactosamine. Influences cell division. This Bacillus subtilis (strain 168) protein is UDP-glucose 4-epimerase.